Consider the following 326-residue polypeptide: Phospho-N-acetylmuramoyl-pentapeptide-transferase (326 aa).

A run of 10 helical transmembrane segments spans residues 4-24 (IWVAFTVSLAVTLIAGPLVIP), 49-69 (TPTMGGIIFLAGTAAGGFLLI), 74-94 (GLIVLLMALGYGFIGFLDDYI), 109-129 (KLLGQVLLAAALAYWAVFEAG), 151-171 (LGWWPFLAFTVLLVVFMSNAV), 179-199 (GLAAGVSMLVALALVPVALAA), 203-223 (GVAAGMAALAGGCLGFLFFNF), 228-248 (VFMGDTGSLALGGGLCAAAVV), 254-274 (LFLIIGGIYVLEALSVIIQVI), and 303-323 (VVITFWALTLVFAAAGLAGLY).

The protein belongs to the glycosyltransferase 4 family. MraY subfamily. Requires Mg(2+) as cofactor.

The protein localises to the cell membrane. The catalysed reaction is UDP-N-acetyl-alpha-D-muramoyl-L-alanyl-gamma-D-glutamyl-meso-2,6-diaminopimeloyl-D-alanyl-D-alanine + di-trans,octa-cis-undecaprenyl phosphate = di-trans,octa-cis-undecaprenyl diphospho-N-acetyl-alpha-D-muramoyl-L-alanyl-D-glutamyl-meso-2,6-diaminopimeloyl-D-alanyl-D-alanine + UMP. Its pathway is cell wall biogenesis; peptidoglycan biosynthesis. In terms of biological role, catalyzes the initial step of the lipid cycle reactions in the biosynthesis of the cell wall peptidoglycan: transfers peptidoglycan precursor phospho-MurNAc-pentapeptide from UDP-MurNAc-pentapeptide onto the lipid carrier undecaprenyl phosphate, yielding undecaprenyl-pyrophosphoryl-MurNAc-pentapeptide, known as lipid I. The polypeptide is Phospho-N-acetylmuramoyl-pentapeptide-transferase (Pelotomaculum thermopropionicum (strain DSM 13744 / JCM 10971 / SI)).